We begin with the raw amino-acid sequence, 349 residues long: Magnesium-protoporphyrin IX monomethyl ester [oxidative] cyclase (349 aa).

It belongs to the AcsF family. Fe cation is required as a cofactor.

The protein localises to the plastid. It localises to the chloroplast. It carries out the reaction Mg-protoporphyrin IX 13-monomethyl ester + 3 NADPH + 3 O2 + 2 H(+) = 3,8-divinyl protochlorophyllide a + 3 NADP(+) + 5 H2O. The protein operates within porphyrin-containing compound metabolism; chlorophyll biosynthesis (light-independent). Catalyzes the formation of the isocyclic ring in chlorophyll biosynthesis. Mediates the cyclase reaction, which results in the formation of divinylprotochlorophyllide (Pchlide) characteristic of all chlorophylls from magnesium-protoporphyrin IX 13-monomethyl ester (MgPMME). This is Magnesium-protoporphyrin IX monomethyl ester [oxidative] cyclase from Pyropia yezoensis (Susabi-nori).